Reading from the N-terminus, the 746-residue chain is Protein psiN (746 aa).

The N-terminal stretch at 1–23 (MGNINKKLFYFLIQLITILIVLS) is a signal peptide. Topologically, residues 24 to 679 (DDSYNSLLPL…KCQSAAVKAA (656 aa)) are extracellular. Asn97 and Asn124 each carry an N-linked (GlcNAc...) asparagine glycan. The region spanning 125-276 (VTSDDPRIYS…YDYCGVCEGM (152 aa)) is the PA14 domain. Asn319, Asn353, Asn380, Asn477, Asn553, Asn628, and Asn654 each carry an N-linked (GlcNAc...) asparagine glycan. Residues 680–700 (VGVGAGAAAGIAIGGAIALGL) form a helical membrane-spanning segment. Topologically, residues 701-746 (AAFGGKRGYDAWKSSRDNQIQTSSENPLYNPNPNQGDNPLYAANNS) are cytoplasmic. Positions 714–746 (SSRDNQIQTSSENPLYNPNPNQGDNPLYAANNS) are disordered. A compositionally biased stretch (polar residues) spans 717-746 (DNQIQTSSENPLYNPNPNQGDNPLYAANNS).

The protein belongs to the prespore-cell-inducing factor family.

Its subcellular location is the membrane. This is Protein psiN (psiN) from Dictyostelium discoideum (Social amoeba).